The following is a 353-amino-acid chain: Ferredoxin--NADP reductase (353 aa).

FAD is bound by residues Thr25, Glu44, Gln52, Tyr57, Val97, Phe132, Asp298, and Ser339.

Belongs to the ferredoxin--NADP reductase type 2 family. In terms of assembly, homodimer. FAD serves as cofactor.

The catalysed reaction is 2 reduced [2Fe-2S]-[ferredoxin] + NADP(+) + H(+) = 2 oxidized [2Fe-2S]-[ferredoxin] + NADPH. The chain is Ferredoxin--NADP reductase from Chlorobium phaeovibrioides (strain DSM 265 / 1930) (Prosthecochloris vibrioformis (strain DSM 265)).